A 316-amino-acid chain; its full sequence is MTKEFHHVTVLLHETIDMLDVKPDGIYVDATLGGAGHSEYLLSKLSEKGHLYAFDQDQNAIDNAQKRLAPYIEKGMVTFIKDNFRHLQARLREAGVQEIDGICYDLGVSSPQLDQRERGFSYKKDAPLDMRMNQDASLTAYEVVNHYDYHDLVRIFFKYGEDKFSKQIARKIEQAREVKPIETTTELAEIIKSAKPAKELKKKGHPAKQIFQAIRIEVNDELGAADESIQQAMDMLALDGRISVITFHSLEDRLTKQLFKEASTVEVPKGLPFIPDDLKPKMELVARKPILPSAEELEANNRSHSAKLRVARKIHK.

S-adenosyl-L-methionine is bound by residues 35-37 (AGH), aspartate 55, phenylalanine 84, aspartate 105, and glutamine 112.

This sequence belongs to the methyltransferase superfamily. RsmH family.

The protein localises to the cytoplasm. The enzyme catalyses cytidine(1402) in 16S rRNA + S-adenosyl-L-methionine = N(4)-methylcytidine(1402) in 16S rRNA + S-adenosyl-L-homocysteine + H(+). Specifically methylates the N4 position of cytidine in position 1402 (C1402) of 16S rRNA. This is Ribosomal RNA small subunit methyltransferase H from Streptococcus pneumoniae (strain Taiwan19F-14).